A 106-amino-acid chain; its full sequence is Small ribosomal subunit protein bS16 (106 aa).

The segment at 84-106 is disordered; sequence KREARNNPEKAVPRKERKAADGK.

In Rhodopseudomonas palustris (strain ATCC BAA-98 / CGA009), this protein is Small ribosomal subunit protein bS16.